The sequence spans 251 residues: GTP cyclohydrolase 1 type 2 homolog (251 aa).

A divalent metal cation contacts are provided by histidine 64, histidine 65, aspartate 102, histidine 219, and glutamate 223.

Belongs to the GTP cyclohydrolase I type 2/NIF3 family. As to quaternary structure, homohexamer.

In Chlamydia trachomatis serovar D (strain ATCC VR-885 / DSM 19411 / UW-3/Cx), this protein is GTP cyclohydrolase 1 type 2 homolog.